Consider the following 202-residue polypeptide: Inner membrane-spanning protein YciB (202 aa).

Helical transmembrane passes span 47-67 (ILLA…WVHF), 75-95 (MLWV…AFQN), 101-121 (WKPT…AFIL), 146-166 (LSWI…AFNF), and 174-194 (FKLF…GMLL).

This sequence belongs to the YciB family.

It is found in the cell inner membrane. Plays a role in cell envelope biogenesis, maintenance of cell envelope integrity and membrane homeostasis. In Dechloromonas aromatica (strain RCB), this protein is Inner membrane-spanning protein YciB.